The sequence spans 148 residues: SsrA-binding protein (148 aa).

The protein belongs to the SmpB family.

It is found in the cytoplasm. Required for rescue of stalled ribosomes mediated by trans-translation. Binds to transfer-messenger RNA (tmRNA), required for stable association of tmRNA with ribosomes. tmRNA and SmpB together mimic tRNA shape, replacing the anticodon stem-loop with SmpB. tmRNA is encoded by the ssrA gene; the 2 termini fold to resemble tRNA(Ala) and it encodes a 'tag peptide', a short internal open reading frame. During trans-translation Ala-aminoacylated tmRNA acts like a tRNA, entering the A-site of stalled ribosomes, displacing the stalled mRNA. The ribosome then switches to translate the ORF on the tmRNA; the nascent peptide is terminated with the 'tag peptide' encoded by the tmRNA and targeted for degradation. The ribosome is freed to recommence translation, which seems to be the essential function of trans-translation. The protein is SsrA-binding protein of Ehrlichia canis (strain Jake).